A 429-amino-acid chain; its full sequence is Serine hydroxymethyltransferase 1 (429 aa).

(6S)-5,6,7,8-tetrahydrofolate is bound by residues L125 and 129–131; that span reads GHL. N6-(pyridoxal phosphate)lysine is present on K234.

This sequence belongs to the SHMT family. As to quaternary structure, homodimer. The cofactor is pyridoxal 5'-phosphate.

The protein resides in the cytoplasm. The catalysed reaction is (6R)-5,10-methylene-5,6,7,8-tetrahydrofolate + glycine + H2O = (6S)-5,6,7,8-tetrahydrofolate + L-serine. Its pathway is one-carbon metabolism; tetrahydrofolate interconversion. The protein operates within amino-acid biosynthesis; glycine biosynthesis; glycine from L-serine: step 1/1. In terms of biological role, catalyzes the reversible interconversion of serine and glycine with tetrahydrofolate (THF) serving as the one-carbon carrier. This reaction serves as the major source of one-carbon groups required for the biosynthesis of purines, thymidylate, methionine, and other important biomolecules. Also exhibits THF-independent aldolase activity toward beta-hydroxyamino acids, producing glycine and aldehydes, via a retro-aldol mechanism. The protein is Serine hydroxymethyltransferase 1 of Agrobacterium fabrum (strain C58 / ATCC 33970) (Agrobacterium tumefaciens (strain C58)).